The chain runs to 225 residues: MAIKDWPVGEGPREKLLNQGVKQLSDAELLAVLLRVGLKGLSAVELARTMINEFGGLRGLLAASQTQVCRLDGIGPVKFAQMQAAVELGTRISQENLQRGKILSDPDLTRDYLMRQLSDRAYEVFAILLLDSQHRVIQFVELFRGTINSASVYPREVVSLVLEKKAAAVIVCHNHPSGIAEPSTADRRITERLKQALQTIDVSLLDHMVVGDREIVSFAERGWID.

The MPN domain occupies 102–224; the sequence is ILSDPDLTRD…IVSFAERGWI (123 aa). Positions 173, 175, and 186 each coordinate Zn(2+). A JAMM motif motif is present at residues 173 to 186; sequence HNHPSGIAEPSTAD.

This sequence belongs to the UPF0758 family.

In Shewanella halifaxensis (strain HAW-EB4), this protein is UPF0758 protein Shal_0429.